The sequence spans 489 residues: 3-octaprenyl-4-hydroxybenzoate carboxy-lyase (489 aa).

Asn-172 is a Mn(2+) binding site. Prenylated FMN-binding positions include 175–177 (IYR), 189–191 (RWL), and 194–195 (RG). Residue Glu-238 participates in Mn(2+) binding. The Proton donor role is filled by Asp-287.

The protein belongs to the UbiD family. Homohexamer. Prenylated FMN serves as cofactor. It depends on Mn(2+) as a cofactor.

It is found in the cell membrane. It catalyses the reaction a 4-hydroxy-3-(all-trans-polyprenyl)benzoate + H(+) = a 2-(all-trans-polyprenyl)phenol + CO2. It participates in cofactor biosynthesis; ubiquinone biosynthesis. In terms of biological role, catalyzes the decarboxylation of 3-octaprenyl-4-hydroxy benzoate to 2-octaprenylphenol, an intermediate step in ubiquinone biosynthesis. The polypeptide is 3-octaprenyl-4-hydroxybenzoate carboxy-lyase (Tolumonas auensis (strain DSM 9187 / NBRC 110442 / TA 4)).